Here is a 968-residue protein sequence, read N- to C-terminus: Angiomotin-like protein 1 (968 aa).

Composition is skewed to polar residues over residues 152–164 (VYQS…QGQE) and 177–187 (RSTQPQQNNEE). The interval 152–258 (VYQSARQEPQ…NRANSGQAHK (107 aa)) is disordered. Residues 203–224 (GQQQQQQQQQQQQQQQQQQGQG) show a composition bias toward low complexity. Phosphoserine is present on residues S253, S281, and S307. Positions 271-291 (RSLSERIMQLSLERNGAKQHL) form a coiled coil. Residues 285-343 (NGAKQHLPSSGNGKSFKAGGEPSPAQPVCKALDPRGPPPEYPFKTKPMKSPVSKNQDHG) form a disordered region. Coiled coils occupy residues 449–645 (VERA…RRLR) and 676–705 (ALME…YLEE). The segment at 721 to 742 (AERDTTISNHSRNGSYGESSLE) is disordered. Over residues 726–738 (TISNHSRNGSYGE) the composition is skewed to polar residues. At S731 the chain carries Phosphoserine. Residues 748–773 (EEEEVVQANRRCQDMEYTIKNLHAKI) are a coiled coil. The interval 785 to 834 (QRSRKDAGKTDSASLRPARSVPSIAAATGTHSRQTSLTSSQLTEEKKEEK) is disordered. Residues S804, S816, and S840 each carry the phosphoserine modification. Residues 853 to 878 (ASAPLLPTTPASALSLPASTTSASST) are compositionally biased toward low complexity. The interval 853–956 (ASAPLLPTTP…GRVSNLLHKP (104 aa)) is disordered. 2 positions are modified to phosphoserine: S912 and S918. The short motif at 965 to 968 (EVLI) is the PDZ-binding element.

This sequence belongs to the angiomotin family. In terms of processing, polyubiquitinated by NEDD4, leading to proteasomal degradation. Expressed in exocrine glands, including pancreas, submandibular gland, lacrimal gland, parotid gland and sublingual gland (at protein level).

The protein resides in the cell junction. It is found in the tight junction. Functionally, inhibits the Wnt/beta-catenin signaling pathway, probably by recruiting CTNNB1 to recycling endosomes and hence preventing its translocation to the nucleus. The sequence is that of Angiomotin-like protein 1 (Amotl1) from Mus musculus (Mouse).